Here is a 239-residue protein sequence, read N- to C-terminus: Venom nerve growth factor (239 aa).

An N-terminal signal peptide occupies residues 1–18 (MSMLCYTLIIAFLIGIWA). Positions 19–125 (APKSEDNVPL…ALNRNIQAKR (107 aa)) are excised as a propeptide. The span at 47-66 (GLKTSRNTDQRHPAPKKADD) shows a compositional bias: basic and acidic residues. The interval 47–68 (GLKTSRNTDQRHPAPKKADDQE) is disordered. Cystine bridges form between Cys139/Cys203, Cys181/Cys231, and Cys191/Cys233.

The protein belongs to the NGF-beta family. In terms of assembly, homodimer; non-covalently linked. As to expression, expressed by the venom gland.

Its subcellular location is the secreted. Functionally, nerve growth factor is important for the development and maintenance of the sympathetic and sensory nervous systems. It stimulates division and differentiation of sympathetic and embryonic sensory neurons as well as basal forebrain cholinergic neurons in the brain. Its relevance in the snake venom is not clear. However, it has been shown to inhibit metalloproteinase-dependent proteolysis of platelet glycoprotein Ib alpha, suggesting a metalloproteinase inhibition to prevent metalloprotease autodigestion and/or protection against prey proteases. Binds a lipid between the two protein chains in the homodimer. The lipid-bound form promotes histamine relase from mouse mast cells, contrary to the lipid-free form. The chain is Venom nerve growth factor from Pseudechis porphyriacus (Red-bellied black snake).